Here is a 244-residue protein sequence, read N- to C-terminus: rRNA adenine N-6-methyltransferase (244 aa).

6 residues coordinate S-adenosyl-L-methionine: Asn-11, Ile-13, Gly-38, Glu-59, Asp-84, and Asn-101.

The protein belongs to the class I-like SAM-binding methyltransferase superfamily. rRNA adenine N(6)-methyltransferase family.

It carries out the reaction adenosine(2085) in 23S rRNA + 2 S-adenosyl-L-methionine = N(6)-dimethyladenosine(2085) in 23S rRNA + 2 S-adenosyl-L-homocysteine + 2 H(+). This protein produces a dimethylation of the adenine residue at position 2085 in 23S rRNA, resulting in reduced affinity between ribosomes and macrolide-lincosamide-streptogramin B antibiotics. This chain is rRNA adenine N-6-methyltransferase (ermC'), found in Bacillus subtilis.